Reading from the N-terminus, the 433-residue chain is Ribosomal RNA small subunit methyltransferase B (433 aa).

S-adenosyl-L-methionine-binding positions include Cys254–Lys260, Asp277, Asp303, and Asp322. Catalysis depends on Cys375, which acts as the Nucleophile.

The protein belongs to the class I-like SAM-binding methyltransferase superfamily. RsmB/NOP family.

It localises to the cytoplasm. The catalysed reaction is cytidine(967) in 16S rRNA + S-adenosyl-L-methionine = 5-methylcytidine(967) in 16S rRNA + S-adenosyl-L-homocysteine + H(+). Functionally, specifically methylates the cytosine at position 967 (m5C967) of 16S rRNA. The polypeptide is Ribosomal RNA small subunit methyltransferase B (Sodalis glossinidius (strain morsitans)).